A 735-amino-acid chain; its full sequence is Glycogen [starch] synthase, muscle (735 aa).

Phosphoserine; by AMPK and PKA is present on serine 8. The residue at position 11 (serine 11) is a Phosphoserine. Lysine 39 lines the UDP pocket. Residues histidine 205 and arginine 211 each coordinate UDP-alpha-D-glucose. Alpha-D-glucose 6-phosphate contacts are provided by histidine 291, glutamate 292, glutamine 294, histidine 297, and lysine 301. Arginine 331 lines the UDP pocket. UDP-alpha-D-glucose is bound at residue arginine 331. Serine 412 bears the Phosphoserine mark. Histidine 501 serves as a coordination point for alpha-D-glucose 6-phosphate. Residues glutamate 510, tryptophan 512, and glycine 513 each contribute to the UDP-alpha-D-glucose site. Residue threonine 515 coordinates UDP. 2 residues coordinate alpha-D-glucose 6-phosphate: arginine 582 and arginine 586. The tract at residues 629–735 (DATQGYRYPR…PASSLGEERN (107 aa)) is disordered. Serine 641 is modified (phosphoserine; by DYRK2, GSK3-alpha, GSK3-beta and PASK). 2 positions are modified to phosphoserine; by GSK3-alpha and GSK3-beta: serine 645 and serine 649. Phosphoserine is present on serine 652. Serine 653 bears the Phosphoserine; by GSK3-alpha and GSK3-beta mark. The residue at position 657 (serine 657) is a Phosphoserine; by CK2. Residues 658 to 681 (EDEEEPRDGLPEEDGERYDEDEEA) show a composition bias toward acidic residues. Basic and acidic residues predominate over residues 682–695 (AKDRRNIRAPEWPR). Serine 698 is subject to Phosphoserine. The span at 698 to 735 (SCTSSSGGSKRSNSVDTSSLSTPSEPLSPASSLGEERN) shows a compositional bias: low complexity. Phosphothreonine is present on threonine 700. A phosphoserine mark is found at serine 709 and serine 711. Threonine 719 is modified (phosphothreonine). Phosphoserine is present on residues serine 725 and serine 729.

It belongs to the glycosyltransferase 3 family. Part of the GYS1-GYG1 complex, a heterooctamer composed of a tetramer of GYS1 and 2 dimers of GYG1, where each GYS1 protomer binds to one GYG1 subunit (via GYG1 C-terminus); the GYS1 tetramer may dissociate from GYG1 dimers to continue glycogen polymerization on its own. Post-translationally, phosphorylation at Ser-8 is required for modification of Ser-11 by casein kinase I. In terms of processing, phosphorylated at Ser-641 by PASK, leading to inactivation; phosphorylation by PASK is inhibited by glycogen. Dephosphorylation at Ser-641 and Ser-645 by PP1 activates the enzyme. Phosphorylation at Ser-8 by AMPK inactivates the enzyme activity. Phosphorylated at Ser-641 by DYRK2, leading to inactivation. Primed phosphorylation at Ser-657 (site 5) by CSNK2A1 and CSNK2A2 is required for inhibitory phosphorylation at Ser-641 (site 3a), Ser-645 (site 3b), Ser-649 (site 3c) and Ser-653 (site 4) by GSK3A and GSK3B.

It carries out the reaction [(1-&gt;4)-alpha-D-glucosyl](n) + UDP-alpha-D-glucose = [(1-&gt;4)-alpha-D-glucosyl](n+1) + UDP + H(+). It functions in the pathway glycan biosynthesis; glycogen biosynthesis. Its activity is regulated as follows. Allosteric activation by glucose-6-phosphate. Phosphorylation reduces the activity towards UDP-glucose. When in the non-phosphorylated state, glycogen synthase does not require glucose-6-phosphate as an allosteric activator; when phosphorylated it does. Glycogen synthase participates in the glycogen biosynthetic process along with glycogenin and glycogen branching enzyme. Extends the primer composed of a few glucose units formed by glycogenin by adding new glucose units to it. In this context, glycogen synthase transfers the glycosyl residue from UDP-Glc to the non-reducing end of alpha-1,4-glucan. This is Glycogen [starch] synthase, muscle from Oryctolagus cuniculus (Rabbit).